The sequence spans 90 residues: MKTSDNERIKYEITGQAVLQILRMKINFSLQTLIKQLLVMKSAEEDAFRRDLIDSIIRDFSNSDSGGPNRRTATADNKSMFNGKKINRIH.

A compositionally biased stretch (polar residues) spans 63–80; sequence SDSGGPNRRTATADNKSM. Residues 63 to 90 form a disordered region; it reads SDSGGPNRRTATADNKSMFNGKKINRIH.

In terms of biological role, probably a connector protein for RcsB/C regulation of biofilm formation, providing additional signal input into the two-component signaling pathway. May serve to stimulate biofilm maturation, probably via the Rcs phosphorelay. Mild overexpression at 16 degrees Celsius increases the production of colanic acid, an exopolysaccharide and matrix component, and reduces adhesive curli fimbriae expression. Both of these effects require RcsB. The protein is Probable two-component-system connector protein YmgA (ymgA) of Escherichia coli (strain K12).